We begin with the raw amino-acid sequence, 634 residues long: 1-deoxy-D-xylulose-5-phosphate synthase (634 aa).

Residues His73 and 114–116 contribute to the thiamine diphosphate site; that span reads GHS. Asp145 is a binding site for Mg(2+). Thiamine diphosphate-binding positions include 146–147, Asn174, Phe285, and Glu367; that span reads GS. Asn174 is a Mg(2+) binding site.

This sequence belongs to the transketolase family. DXPS subfamily. As to quaternary structure, homodimer. Mg(2+) is required as a cofactor. Requires thiamine diphosphate as cofactor.

The enzyme catalyses D-glyceraldehyde 3-phosphate + pyruvate + H(+) = 1-deoxy-D-xylulose 5-phosphate + CO2. It participates in metabolic intermediate biosynthesis; 1-deoxy-D-xylulose 5-phosphate biosynthesis; 1-deoxy-D-xylulose 5-phosphate from D-glyceraldehyde 3-phosphate and pyruvate: step 1/1. Its function is as follows. Catalyzes the acyloin condensation reaction between C atoms 2 and 3 of pyruvate and glyceraldehyde 3-phosphate to yield 1-deoxy-D-xylulose-5-phosphate (DXP). This Syntrophotalea carbinolica (strain DSM 2380 / NBRC 103641 / GraBd1) (Pelobacter carbinolicus) protein is 1-deoxy-D-xylulose-5-phosphate synthase.